Reading from the N-terminus, the 332-residue chain is Beta-ketoacyl-[acyl-carrier-protein] synthase III (332 aa).

Residues C114 and H255 contribute to the active site. The tract at residues 256-260 (QANLR) is ACP-binding. N285 is an active-site residue.

The protein belongs to the thiolase-like superfamily. FabH family. As to quaternary structure, homodimer.

It is found in the cytoplasm. The catalysed reaction is malonyl-[ACP] + acetyl-CoA + H(+) = 3-oxobutanoyl-[ACP] + CO2 + CoA. It functions in the pathway lipid metabolism; fatty acid biosynthesis. Functionally, catalyzes the condensation reaction of fatty acid synthesis by the addition to an acyl acceptor of two carbons from malonyl-ACP. Catalyzes the first condensation reaction which initiates fatty acid synthesis and may therefore play a role in governing the total rate of fatty acid production. Possesses both acetoacetyl-ACP synthase and acetyl transacylase activities. Its substrate specificity determines the biosynthesis of branched-chain and/or straight-chain of fatty acids. This chain is Beta-ketoacyl-[acyl-carrier-protein] synthase III, found in Sulfurimonas denitrificans (strain ATCC 33889 / DSM 1251) (Thiomicrospira denitrificans (strain ATCC 33889 / DSM 1251)).